Consider the following 263-residue polypeptide: Bidirectional sugar transporter SWEET3 (263 aa).

Over methionine 1–leucine 7 the chain is Extracellular. The chain crosses the membrane as a helical span at residues serine 8 to phenylalanine 28. One can recognise a MtN3/slv 1 domain in the interval isoleucine 9–lysine 97. The Cytoplasmic segment spans residues serine 29 to cysteine 42. The chain crosses the membrane as a helical span at residues phenylalanine 43–valine 63. The Extracellular segment spans residues serine 64 to proline 71. A helical membrane pass occupies residues leucine 72–tyrosine 92. Over tyrosine 93–glycine 103 the chain is Cytoplasmic. A helical membrane pass occupies residues valine 104–phenylalanine 124. Over aspartate 125–serine 132 the chain is Extracellular. A helical membrane pass occupies residues phenylalanine 133 to methionine 153. The 85-residue stretch at phenylalanine 133–lysine 217 folds into the MtN3/slv 2 domain. The Cytoplasmic portion of the chain corresponds to lysine 154 to methionine 165. A helical transmembrane segment spans residues proline 166–leucine 186. Topologically, residues serine 187–leucine 190 are extracellular. A helical membrane pass occupies residues phenylalanine 191–phenylalanine 211. Topologically, residues lysine 212–isoleucine 263 are cytoplasmic.

Belongs to the SWEET sugar transporter family. Forms heterooligomers with SWEET11, SWEET13 and SWEET17.

The protein resides in the cell membrane. Functionally, mediates both low-affinity uptake and efflux of sugar across the plasma membrane. The chain is Bidirectional sugar transporter SWEET3 from Arabidopsis thaliana (Mouse-ear cress).